The following is a 258-amino-acid chain: Allene oxide cyclase 3, chloroplastic (258 aa).

A chloroplast-targeting transit peptide spans 1-56 (MASSSAAMSLESISMTTLNNLSRNHQSHRSSLLGFSRSFQNLGISSNGPDFSSRSR).

This sequence belongs to the allene oxide cyclase family. Highly expressed in fully developed leaves.

It localises to the plastid. The protein resides in the chloroplast. It catalyses the reaction (9Z,13S,15Z)-12,13-epoxyoctadeca-9,11,15-trienoate = (9S,13S,15Z)-12-oxophyto-10,15-dienoate. Functionally, involved in the production of 12-oxo-phytodienoic acid (OPDA), a precursor of jasmonic acid. The protein is Allene oxide cyclase 3, chloroplastic (AOC3) of Arabidopsis thaliana (Mouse-ear cress).